We begin with the raw amino-acid sequence, 237 residues long: Uridylate kinase (237 aa).

Lysine 12–glycine 15 contributes to the ATP binding site. Residues glycine 20–glycine 25 are involved in allosteric activation by GTP. Glycine 54 lines the UMP pocket. Positions 55 and 59 each coordinate ATP. UMP-binding positions include aspartate 74 and threonine 135–threonine 142. ATP is bound by residues threonine 162, tyrosine 168, and aspartate 171.

The protein belongs to the UMP kinase family. In terms of assembly, homohexamer.

The protein localises to the cytoplasm. The enzyme catalyses UMP + ATP = UDP + ADP. It participates in pyrimidine metabolism; CTP biosynthesis via de novo pathway; UDP from UMP (UMPK route): step 1/1. With respect to regulation, allosterically activated by GTP. Inhibited by UTP. In terms of biological role, catalyzes the reversible phosphorylation of UMP to UDP. The protein is Uridylate kinase of Actinobacillus succinogenes (strain ATCC 55618 / DSM 22257 / CCUG 43843 / 130Z).